The following is a 531-amino-acid chain: Ribosomal protein uS12 methylthiotransferase RimO (531 aa).

Polar residues-rich tracts occupy residues 1–19 (MPNISTESVNTTIAPSQPA) and 55–67 (HNQNRSVEQSSEV). Positions 1-77 (MPNISTESVN…VSAASAKTTT (77 aa)) are disordered. Residues 68-77 (VSAASAKTTT) show a composition bias toward low complexity. Residues 88–198 (PKIGFVSLGC…VIRAVALHVP (111 aa)) enclose the MTTase N-terminal domain. 6 residues coordinate [4Fe-4S] cluster: Cys-97, Cys-133, Cys-162, Cys-236, Cys-240, and Cys-243. The 238-residue stretch at 222 to 459 (LTPSHYAYLK…MTLQQDISAQ (238 aa)) folds into the Radical SAM core domain. Residues 462–531 (QEKIGKTLMV…EYDLFASYKG (70 aa)) enclose the TRAM domain.

The protein belongs to the methylthiotransferase family. RimO subfamily. The cofactor is [4Fe-4S] cluster.

Its subcellular location is the cytoplasm. It catalyses the reaction L-aspartate(89)-[ribosomal protein uS12]-hydrogen + (sulfur carrier)-SH + AH2 + 2 S-adenosyl-L-methionine = 3-methylsulfanyl-L-aspartate(89)-[ribosomal protein uS12]-hydrogen + (sulfur carrier)-H + 5'-deoxyadenosine + L-methionine + A + S-adenosyl-L-homocysteine + 2 H(+). In terms of biological role, catalyzes the methylthiolation of an aspartic acid residue of ribosomal protein uS12. The protein is Ribosomal protein uS12 methylthiotransferase RimO of Psychrobacter cryohalolentis (strain ATCC BAA-1226 / DSM 17306 / VKM B-2378 / K5).